Here is a 108-residue protein sequence, read N- to C-terminus: uncharacterized protein (108 aa).

Helical transmembrane passes span 32-52 and 68-88; these read YFFFLLFCKLLNAAEAPLLAI and SYLLLLITMLEGAEYFSLVVG.

It is found in the membrane. This is an uncharacterized protein from Saccharomyces cerevisiae (strain ATCC 204508 / S288c) (Baker's yeast).